Here is a 288-residue protein sequence, read N- to C-terminus: Bifunctional protein FolD (288 aa).

Residues 165 to 167 (GRS) and S190 each bind NADP(+).

It belongs to the tetrahydrofolate dehydrogenase/cyclohydrolase family. In terms of assembly, homodimer.

The enzyme catalyses (6R)-5,10-methylene-5,6,7,8-tetrahydrofolate + NADP(+) = (6R)-5,10-methenyltetrahydrofolate + NADPH. It catalyses the reaction (6R)-5,10-methenyltetrahydrofolate + H2O = (6R)-10-formyltetrahydrofolate + H(+). It functions in the pathway one-carbon metabolism; tetrahydrofolate interconversion. Catalyzes the oxidation of 5,10-methylenetetrahydrofolate to 5,10-methenyltetrahydrofolate and then the hydrolysis of 5,10-methenyltetrahydrofolate to 10-formyltetrahydrofolate. The sequence is that of Bifunctional protein FolD from Bdellovibrio bacteriovorus (strain ATCC 15356 / DSM 50701 / NCIMB 9529 / HD100).